We begin with the raw amino-acid sequence, 91 residues long: Acylphosphatase (91 aa).

Residues 3-89 enclose the Acylphosphatase-like domain; it reads TLLVRISGKV…PDQPGFSQKP (87 aa). Residues R18 and N36 contribute to the active site.

It belongs to the acylphosphatase family.

It carries out the reaction an acyl phosphate + H2O = a carboxylate + phosphate + H(+). This chain is Acylphosphatase (acyP), found in Rhodospirillum rubrum (strain ATCC 11170 / ATH 1.1.1 / DSM 467 / LMG 4362 / NCIMB 8255 / S1).